The chain runs to 979 residues: MRGYHGDRGSHPRPARFADQQHMDVGPAARAPYLLGSREAFSTEPRFCAPRAGLGHISPEGPLSLSEGPSVGPEGGPAGAGVGGGSSTFPRMYPGQGPFDTCEDCVGHPQGKGAPRLPPTLLDQFEKQLPVQQDGFHTLPYQRGPAGAGPGPAPGTGTAPEPRSESPSRIRHLVHSVQKLFAKSHSLEAPGKRDYNGPKAEGRGGSGGDSYPGPGSGGPHTSHHHHHHHHHHHHQSRHGKRSKSKDRKGDGRHQAKSTGWWSSDDNLDSDSGFLAGGRPPGEPGGPFCLEGPDGSYRDLSFKGRSGGSEGRCLACTGMSMSLDGQSVKRSAWHTMMVSQGRDGYPGAGPGKGLLGPETKAKARTYHYLQVPQDDWGGYPTGGKDGEIPCRRMRSGSYIKAMGDEESGDSDGSPKTSPKAVARRFTTRRSSSVDQARINCCVPPRIHPRSSIPGYSRSLTTGQLSDELNQQLEAVCGSVFGELESQAVDALDLPGCFRMRSHSYLRAIQAGCSQDDDCLPLLATPAAVSGRPGSSFNFRKAPPPIPPGSQAPPRISITAQSSTDSAHESFTAAEGPARRCSSADGLDGPAMGARTLELAPVPPRASPKPPTLIIKTIPGREELRSLARQRKWRPSIGVQVETISDSDTENRSRREFHSIGVQVEEDKRRARFKRSNSVTAGVQADLELEGLAGLATVATEDKALQFGRSFQRHASEPQPGPRAPTYSVFRTVHTQGQWAYREGYPLPYEPPATDGSPGPAPAPTPGPGAGRRDSWIERGSRSLPDSGRASPCPRDGEWFIKMLRAEVEKLEHWCQQMEREAEDYELPEEILEKIRSAVGSTQLLLSQKVQQFFRLCQQSMDPTAFPVPTFQDLAGFWDLLQLSIEDVTLKFLELQQLKANSWKLLEPKEEKKVPPPIPKKPLRGRGVPVKERSLDSVDRQRQEARKRLLAAKRAASFRHSSATESADSIEIYIPEAQTRL.

Positions 1–10 (MRGYHGDRGS) are enriched in basic and acidic residues. Disordered regions lie at residues 1 to 20 (MRGYHGDRGSHPRPARFADQ), 52 to 95 (AGLG…MYPG), 136 to 169 (FHTLPYQRGPAGAGPGPAPGTGTAPEPRSESPSR), 182 to 291 (AKSH…CLEG), 400 to 429 (AMGDEESGDSDGSPKTSPKAVARRFTTRRS), and 537 to 581 (FRKA…RCSS). Residue Ser58 is modified to Phosphoserine. Residues 73–86 (PEGGPAGAGVGGGS) show a composition bias toward gly residues. Positions 190 to 202 (PGKRDYNGPKAEG) are enriched in basic and acidic residues. The segment covering 203 to 218 (RGGSGGDSYPGPGSGG) has biased composition (gly residues). Positions 221–246 (TSHHHHHHHHHHHHQSRHGKRSKSKD) are enriched in basic residues. Residues Ser406, Ser409, Ser412, and Ser416 each carry the phosphoserine modification. Positions 540-549 (APPPIPPGSQ) are enriched in pro residues. 2 positions are modified to phosphoserine: Ser643 and Ser645. 2 disordered regions span residues 741-790 (EGYP…RASP) and 908-940 (EEKKVPPPIPKKPLRGRGVPVKERSLDSVDRQR). Basic and acidic residues-rich tracts occupy residues 769 to 779 (GRRDSWIERGS) and 927 to 940 (PVKERSLDSVDRQR). Residues Ser932, Ser935, and Ser967 each carry the phosphoserine modification.

This sequence belongs to the SAPAP family. As to quaternary structure, interacts with DLG4/PSD-95.

It localises to the cell membrane. Its subcellular location is the postsynaptic density. It is found in the synapse. Functionally, may play a role in the molecular organization of synapses and neuronal cell signaling. Could be an adapter protein linking ion channel to the subsynaptic cytoskeleton. May induce enrichment of PSD-95/SAP90 at the plasma membrane. The polypeptide is Disks large-associated protein 3 (DLGAP3) (Homo sapiens (Human)).